Consider the following 581-residue polypeptide: Arginine--tRNA ligase (581 aa).

The short motif at 126–136 is the 'HIGH' region element; that stretch reads PNLAKEMHVGH.

Belongs to the class-I aminoacyl-tRNA synthetase family. As to quaternary structure, monomer.

The protein localises to the cytoplasm. The enzyme catalyses tRNA(Arg) + L-arginine + ATP = L-arginyl-tRNA(Arg) + AMP + diphosphate. This is Arginine--tRNA ligase from Shewanella putrefaciens (strain CN-32 / ATCC BAA-453).